A 102-amino-acid polypeptide reads, in one-letter code: Acid shock protein (102 aa).

The signal sequence occupies residues 1 to 21 (MKKVLALVVAAAMGLSSAAFA). The span at 22–41 (AETATTPAPTATTTKAAPAK) shows a compositional bias: low complexity. A propeptide spanning residues 22–58 (AETATTPAPTATTTKAAPAKTTHHKKQHKAAPAQKAQ) is cleaved from the precursor. Residues 22 to 102 (AETATTPAPT…PAKPAAQPAA (81 aa)) form a disordered region. Residues 80-90 (AAKKHAKKHSH) are compositionally biased toward basic residues. Low complexity predominate over residues 91 to 102 (QQPAKPAAQPAA).

This sequence belongs to the Asr family. Post-translationally, proteolytic processing gives rise to the active protein.

It localises to the periplasm. Required for growth and/or survival at acidic conditions. The protein is Acid shock protein of Escherichia coli O45:K1 (strain S88 / ExPEC).